Reading from the N-terminus, the 410-residue chain is Arginine biosynthesis bifunctional protein ArgJ (410 aa).

Residues Thr158, Lys184, Thr195, Glu282, Asn405, and Ser410 each contribute to the substrate site. The active-site Nucleophile is Thr195.

Belongs to the ArgJ family. Heterotetramer of two alpha and two beta chains.

It is found in the cytoplasm. The catalysed reaction is N(2)-acetyl-L-ornithine + L-glutamate = N-acetyl-L-glutamate + L-ornithine. It carries out the reaction L-glutamate + acetyl-CoA = N-acetyl-L-glutamate + CoA + H(+). The protein operates within amino-acid biosynthesis; L-arginine biosynthesis; L-ornithine and N-acetyl-L-glutamate from L-glutamate and N(2)-acetyl-L-ornithine (cyclic): step 1/1. Its pathway is amino-acid biosynthesis; L-arginine biosynthesis; N(2)-acetyl-L-ornithine from L-glutamate: step 1/4. Catalyzes two activities which are involved in the cyclic version of arginine biosynthesis: the synthesis of N-acetylglutamate from glutamate and acetyl-CoA as the acetyl donor, and of ornithine by transacetylation between N(2)-acetylornithine and glutamate. In Bartonella henselae (strain ATCC 49882 / DSM 28221 / CCUG 30454 / Houston 1) (Rochalimaea henselae), this protein is Arginine biosynthesis bifunctional protein ArgJ.